Consider the following 255-residue polypeptide: tRNA (guanine-N(1)-)-methyltransferase (255 aa).

S-adenosyl-L-methionine-binding positions include Gly117 and 137–142; that span reads LGDFVL.

This sequence belongs to the RNA methyltransferase TrmD family. Homodimer.

The protein localises to the cytoplasm. The catalysed reaction is guanosine(37) in tRNA + S-adenosyl-L-methionine = N(1)-methylguanosine(37) in tRNA + S-adenosyl-L-homocysteine + H(+). In terms of biological role, specifically methylates guanosine-37 in various tRNAs. The polypeptide is tRNA (guanine-N(1)-)-methyltransferase (Paraburkholderia phymatum (strain DSM 17167 / CIP 108236 / LMG 21445 / STM815) (Burkholderia phymatum)).